Here is a 178-residue protein sequence, read N- to C-terminus: Disulfide bond formation protein B (178 aa).

Residues 1–14 (MLSFFKTLSTKRSA) lie on the Cytoplasmic side of the membrane. Residues 15–31 (WFLLFSSALLLEAIALY) form a helical membrane-spanning segment. At 32-49 (FQHGMGLAPCVMCIYERV) the chain is on the periplasmic side. Cys-41 and Cys-44 are joined by a disulfide. A helical membrane pass occupies residues 50 to 65 (AILGIAFSGLLGLLYP). Residues 66–72 (SSMLLRL) lie on the Cytoplasmic side of the membrane. The helical transmembrane segment at 73-90 (VALLIGLSSAIKGLMISI) threads the bilayer. At 91 to 145 (THLDLQLYPAPWKQCSAVAEFPETLPLDQWFPALFLPSGSCSEVTWQFLGFSMVQ) the chain is on the periplasmic side. An intrachain disulfide couples Cys-105 to Cys-131. Residues 146–164 (WIVVIFALYTLLLALIFIS) form a helical membrane-spanning segment. Over 165 to 177 (QVKRLKPKQRRLF) the chain is Cytoplasmic.

This sequence belongs to the DsbB family.

Its subcellular location is the cell inner membrane. In terms of biological role, required for disulfide bond formation in some periplasmic proteins. Acts by oxidizing the DsbA protein. The chain is Disulfide bond formation protein B from Pasteurella multocida (strain Pm70).